A 302-amino-acid chain; its full sequence is MAAGSGREEAAAAAGYGRGPPWVFRGRALYQLHLVKAATARAFVPRELRLVEAFGYTLGGMFLARYDDSPAGKFDELVVIAGIVWNPPTSCAWAARVLVNSAEACRHGRKEVGLPSHVATFSQTEADALRNKPLVKSNSFLSLLGMRSTVSNQGNDREIEISETKGSCTRHLCNISVPLTGSHKHKWMGPAIRMSLPSFSGQIEDHPDLLKYSCQVECRVRPVRPAKIWRPRITEPQECPDGKISSKGSEVLAEPDAQKHTVMVLLSKPILALEFNSLEMHVDAPKIVIPHSKKKEVRYSST.

Its function is as follows. Required for neoxanthin biosynthesis. Probably not involved directly in the enzymatic conversion of violaxanthin to neoxanthin. Is necessary but not sufficient for neoxanthin synthesis. In Oryza sativa subsp. japonica (Rice), this protein is Protein NEOXANTHIN-DEFICIENT 1.